The following is a 138-amino-acid chain: Small ribosomal subunit protein uS11 (138 aa).

Low complexity predominate over residues 1 to 12 (MAPKKPGAAGPK). Disordered stretches follow at residues 1–27 (MAPK…NVPH) and 119–138 (ISDV…RRRV). Residues 13–22 (KAQKTRRREK) are compositionally biased toward basic residues.

The protein belongs to the universal ribosomal protein uS11 family. In terms of assembly, part of the 30S ribosomal subunit. Interacts with proteins S7 and S18. Binds to IF-3.

In terms of biological role, located on the platform of the 30S subunit, it bridges several disparate RNA helices of the 16S rRNA. Forms part of the Shine-Dalgarno cleft in the 70S ribosome. The sequence is that of Small ribosomal subunit protein uS11 from Mycobacteroides abscessus (strain ATCC 19977 / DSM 44196 / CCUG 20993 / CIP 104536 / JCM 13569 / NCTC 13031 / TMC 1543 / L948) (Mycobacterium abscessus).